Here is a 204-residue protein sequence, read N- to C-terminus: Thymidine kinase (204 aa).

ATP contacts are provided by residues 23–30 and 95–98; these read GSMFSGKT and DEAQ. E96 serves as the catalytic Proton acceptor. Zn(2+) is bound by residues C152, C155, C184, and C187.

It belongs to the thymidine kinase family. Homotetramer.

The protein resides in the cytoplasm. It catalyses the reaction thymidine + ATP = dTMP + ADP + H(+). In Porphyromonas gingivalis (strain ATCC 33277 / DSM 20709 / CIP 103683 / JCM 12257 / NCTC 11834 / 2561), this protein is Thymidine kinase.